A 241-amino-acid chain; its full sequence is Accessory protein p30II (241 aa).

Short sequence motifs (nuclear localization signal) lie at residues Arg73–Arg78 and Gly91–Arg98. Positions Ala86 to Leu153 are disordered. Over residues Pro107 to Gly138 the composition is skewed to low complexity. Positions Leu175–Arg184 match the Mitochondrial targeting signal motif.

Belongs to the HTLV-1 accessory protein p30II family. In terms of assembly, p30II binds to the KIX domains of CREBBP and EP300.

The protein resides in the host nucleus. Its subcellular location is the host nucleolus. It localises to the host mitochondrion inner membrane. P30II is a multifunctional regulator that sequesters EP300/CREBBP and down-regulates CREB-responsive element (CRE) and Tax-responsive element (TRE) mediated transcription. Specifically binds and represses tax/rex mRNA nuclear export. Since Tax and Rex are positive regulators of viral gene expression, their inhibition by p30II reduces virion production, and allows the virus to escape the host immune surveillance and persist latently in an immune-competent host. Its function is as follows. p13II increases mitochondrial permeability to monovalent cations, producing a rapid, membrane potential-dependent influx of potassium. This could involve a channel-forming activity. Interferes with cell proliferation and transformation and promotes apoptosis induced by ceramide and Fas ligand, probably using the Ras signaling. The polypeptide is Accessory protein p30II (Human T-cell leukemia virus 1 (isolate Caribbea HS-35 subtype A) (HTLV-1)).